The sequence spans 976 residues: Apical junction component 1 homolog (976 aa).

Positions 21–49 are disordered; the sequence is ATPGPASKCSPCERSVARPAEPAPFNKRH. A Phosphoserine modification is found at S52. Disordered regions lie at residues 61–136, 220–242, and 264–294; these read GPAM…EPAY, PQFH…PTPS, and YAER…RGSF. The segment covering 98–113 has biased composition (pro residues); that stretch reads RAPPGLTPAPASPPVL. Basic and acidic residues predominate over residues 116 to 134; it reads RGREAQRAARAEASPRREP. S129 is modified (phosphoserine). Position 322 is an omega-N-methylarginine (R322). Residues 412–443 form a disordered region; the sequence is LQVVPPSDPDPLLASWHGGTGTSPPRLATDSR. Phosphoserine occurs at positions 468, 509, and 512. Disordered stretches follow at residues 539–574 and 614–660; these read DLRA…SGRQ and LDSR…ADED. Low complexity-rich tracts occupy residues 616 to 625 and 633 to 655; these read SRPAGSGAPA and PASA…SPEP. R749 is subject to Asymmetric dimethylarginine; alternate. An Omega-N-methylarginine; alternate modification is found at R749. The interval 855-888 is disordered; the sequence is GSPARPPPARSREPDMETLILTPPPGTAGLDQDG.

It localises to the apical cell membrane. It is found in the cell projection. The protein localises to the cilium. The protein resides in the cell junction. Its subcellular location is the adherens junction. Functionally, may be involved in the control of adherens junction integrity. This chain is Apical junction component 1 homolog, found in Homo sapiens (Human).